A 328-amino-acid polypeptide reads, in one-letter code: Nucleotide-binding protein Blon_1085/BLIJ_1109 (328 aa).

The interval 1 to 33 (MSQQTTIRDTGEAAATNAPANSATSTSTPDNQP) is disordered. Low complexity predominate over residues 13-29 (AAATNAPANSATSTSTP). 46–53 (GMSGAGRS) lines the ATP pocket. Residue 101–104 (DVRS) coordinates GTP.

The protein belongs to the RapZ-like family.

Its function is as follows. Displays ATPase and GTPase activities. In Bifidobacterium longum subsp. infantis (strain ATCC 15697 / DSM 20088 / JCM 1222 / NCTC 11817 / S12), this protein is Nucleotide-binding protein Blon_1085/BLIJ_1109.